The chain runs to 237 residues: Leucyl/phenylalanyl-tRNA--protein transferase (237 aa).

Belongs to the L/F-transferase family.

Its subcellular location is the cytoplasm. It catalyses the reaction N-terminal L-lysyl-[protein] + L-leucyl-tRNA(Leu) = N-terminal L-leucyl-L-lysyl-[protein] + tRNA(Leu) + H(+). It carries out the reaction N-terminal L-arginyl-[protein] + L-leucyl-tRNA(Leu) = N-terminal L-leucyl-L-arginyl-[protein] + tRNA(Leu) + H(+). The enzyme catalyses L-phenylalanyl-tRNA(Phe) + an N-terminal L-alpha-aminoacyl-[protein] = an N-terminal L-phenylalanyl-L-alpha-aminoacyl-[protein] + tRNA(Phe). Functions in the N-end rule pathway of protein degradation where it conjugates Leu, Phe and, less efficiently, Met from aminoacyl-tRNAs to the N-termini of proteins containing an N-terminal arginine or lysine. This chain is Leucyl/phenylalanyl-tRNA--protein transferase, found in Aromatoleum aromaticum (strain DSM 19018 / LMG 30748 / EbN1) (Azoarcus sp. (strain EbN1)).